Reading from the N-terminus, the 1945-residue chain is Rho GTPase-activating protein 21 (1945 aa).

The segment at 26–53 (CEVSKNKDGKDQGEPVSPSEDEPFSWPG) is disordered. A compositionally biased stretch (basic and acidic residues) spans 29 to 38 (SKNKDGKDQG). Ser-42 and Ser-63 each carry phosphoserine. The 110-residue stretch at 56-165 (TVMLKRTSQG…TLELSVMPKD (110 aa)) folds into the PDZ domain. Disordered regions lie at residues 210–229 (TAQP…QQTS) and 326–365 (HQTT…DSPP). Residues 347-358 (SGHSEGISSSRS) are compositionally biased toward low complexity. Ser-454 is subject to Phosphoserine. Residues 499–512 (EATATVNSESQIPD) show a composition bias toward polar residues. The interval 499–519 (EATATVNSESQIPDSNGERKQ) is disordered. Omega-N-methylarginine is present on residues Arg-549 and Arg-569. 2 disordered regions span residues 573 to 647 (PVSQ…RPVN) and 674 to 702 (EVSS…LELP). Over residues 589 to 600 (SNRNFPTTTGVS) the composition is skewed to polar residues. 2 positions are modified to phosphoserine: Ser-610 and Ser-619. Polar residues predominate over residues 674 to 696 (EVSSCLPGTSAKTSPQLSENLGT). The residue at position 741 (Thr-741) is a Phosphothreonine. Phosphoserine is present on residues Ser-851, Ser-856, and Ser-875. Disordered regions lie at residues 852–879 (HDQE…YDEG) and 902–921 (ITDS…SSSE). Positions 866–879 (HSSKTERSKSYDEG) are enriched in basic and acidic residues. Tyr-876 bears the Phosphotyrosine mark. Residues Ser-918, Ser-920, Ser-948, Ser-1093, and Ser-1109 each carry the phosphoserine modification. The interval 924–1091 (SDAAREGWLQ…AKSEPKTQSP (168 aa)) is interaction with ARF1 and ARF6. Residues 925–1034 (DAAREGWLQF…WIKTIQESSN (110 aa)) enclose the PH domain. The interval 1080–1120 (LGAKSEPKTQSPHSPKEESERKLLSKDDTSPPKDKGTWRRG) is disordered. The span at 1093–1116 (SPKEESERKLLSKDDTSPPKDKGT) shows a compositional bias: basic and acidic residues. The Rho-GAP domain maps to 1141 to 1333 (VRLDDCPPAH…TLIQHHDWFF (193 aa)). Disordered stretches follow at residues 1373-1396 (PGDV…SGKD), 1412-1632 (SRKR…PVFP), 1649-1794 (ARVS…LGGH), and 1846-1945 (RTSA…ETPP). Low complexity predominate over residues 1377–1395 (SDSATSDSAKSKGSWGSGK). Phosphoserine occurs at positions 1412, 1426, and 1427. Basic and acidic residues-rich tracts occupy residues 1435 to 1457 (FFKK…RESE) and 1471 to 1488 (SNTK…KIPW). Residue Lys-1438 forms a Glycyl lysine isopeptide (Lys-Gly) (interchain with G-Cter in SUMO) linkage. Thr-1504 is subject to Phosphothreonine. Composition is skewed to low complexity over residues 1531-1556 (SDSG…STSP) and 1569-1589 (TTTS…LDSS). The segment at 1579-1848 (STTYLTSLDS…WLARERVRTS (270 aa)) is interaction with CTNNA1. Polar residues predominate over residues 1590–1599 (RLSPEVQSVA). Residues 1611–1621 (SELVSEGRPVE) show a composition bias toward basic and acidic residues. Residue Ser-1656 is modified to Phosphoserine. Composition is skewed to polar residues over residues 1658 to 1681 (GSEA…QFSS) and 1729 to 1738 (STGSLLTPSR). Thr-1669 bears the Phosphothreonine mark. Residue Ser-1729 is modified to Phosphoserine. The segment covering 1739-1757 (SESEKQEATWKTKIADRLK) has biased composition (basic and acidic residues). Residues 1782–1792 (RKNIKRRHTLG) are compositionally biased toward basic residues. Positions 1871 to 1882 (PISTHSPPSQQP) are enriched in polar residues. A compositionally biased stretch (low complexity) spans 1887-1896 (AATSTLASTS). Thr-1902 is subject to Phosphothreonine. At Ser-1906 the chain carries Phosphoserine. A compositionally biased stretch (polar residues) spans 1907–1927 (PDQINRESFQNMSQNASSTAN). Residues 1932-1945 (KQSESPDTKAETPP) show a composition bias toward basic and acidic residues.

In terms of assembly, interacts with CTNNA1. Interacts with GTP-bound ARF1 and probably ARF6. In terms of processing, sumoylated with SUMO2 and SUMO3 in proliferating lymphocytes.

It localises to the golgi apparatus membrane. The protein resides in the cell junction. Its subcellular location is the cytoplasmic vesicle membrane. It is found in the cytoplasm. The protein localises to the cytoskeleton. Functions as a GTPase-activating protein (GAP) for RHOA and CDC42. Downstream partner of ARF1 which may control Golgi apparatus structure and function. Also required for CTNNA1 recruitment to adherens junctions. The polypeptide is Rho GTPase-activating protein 21 (Mus musculus (Mouse)).